Reading from the N-terminus, the 756-residue chain is Ribonucleoside-diphosphate reductase subunit alpha (756 aa).

The region spanning 5 to 95 (LMVTKRDGTQ…IFHLRKKAYG (91 aa)) is the ATP-cone domain. ATP is bound by residues K9, 15 to 21 (EQINLDK), T55, and K91. T209 serves as a coordination point for GDP. A disulfide bridge links C225 with C462. Residues 232-234 (DSL), R262, and R269 contribute to the dTTP site. A GDP-binding site is contributed by N437. N437 serves as the catalytic Proton acceptor. Catalysis depends on C439, which acts as the Cysteine radical intermediate. GDP-binding positions include E441 and 623–625 (ETS). The Proton acceptor role is filled by E441.

It belongs to the ribonucleoside diphosphate reductase large chain family. Tetramer of two alpha and two beta subunits.

The catalysed reaction is a 2'-deoxyribonucleoside 5'-diphosphate + [thioredoxin]-disulfide + H2O = a ribonucleoside 5'-diphosphate + [thioredoxin]-dithiol. Under complex allosteric control mediated by deoxynucleoside triphosphates and ATP binding to separate specificity and activation sites on the alpha subunit. The type of nucleotide bound at the specificity site determines substrate preference. It seems probable that ATP makes the enzyme reduce CDP and UDP, dGTP favors ADP reduction and dTTP favors GDP reduction. Stimulated by ATP and inhibited by dATP binding to the activity site. Functionally, provides the precursors necessary for DNA synthesis. Catalyzes the biosynthesis of deoxyribonucleotides from the corresponding ribonucleotides. The polypeptide is Ribonucleoside-diphosphate reductase subunit alpha (nrdA) (Haemophilus influenzae (strain ATCC 51907 / DSM 11121 / KW20 / Rd)).